The chain runs to 370 residues: GDSL esterase/lipase At1g09390 (370 aa).

Positions 1 to 27 (MATLSLHSHSFLLVLLPFILILRQNLA) are cleaved as a signal peptide. S44 functions as the Nucleophile in the catalytic mechanism. N-linked (GlcNAc...) asparagine glycans are attached at residues N90 and N315. Residues D336 and H339 contribute to the active site.

This sequence belongs to the 'GDSL' lipolytic enzyme family.

The protein localises to the secreted. This is GDSL esterase/lipase At1g09390 from Arabidopsis thaliana (Mouse-ear cress).